Here is a 197-residue protein sequence, read N- to C-terminus: 3-isopropylmalate dehydratase small subunit (197 aa).

Belongs to the LeuD family. LeuD type 1 subfamily. In terms of assembly, heterodimer of LeuC and LeuD.

The enzyme catalyses (2R,3S)-3-isopropylmalate = (2S)-2-isopropylmalate. The protein operates within amino-acid biosynthesis; L-leucine biosynthesis; L-leucine from 3-methyl-2-oxobutanoate: step 2/4. Catalyzes the isomerization between 2-isopropylmalate and 3-isopropylmalate, via the formation of 2-isopropylmaleate. The sequence is that of 3-isopropylmalate dehydratase small subunit from Streptococcus suis (strain 98HAH33).